The following is a 462-amino-acid chain: UDP-N-acetylmuramate--L-alanine ligase (462 aa).

Position 112-118 (112-118 (GTHGKTT)) interacts with ATP.

This sequence belongs to the MurCDEF family.

Its subcellular location is the cytoplasm. The enzyme catalyses UDP-N-acetyl-alpha-D-muramate + L-alanine + ATP = UDP-N-acetyl-alpha-D-muramoyl-L-alanine + ADP + phosphate + H(+). It participates in cell wall biogenesis; peptidoglycan biosynthesis. Its function is as follows. Cell wall formation. The chain is UDP-N-acetylmuramate--L-alanine ligase from Geobacter sulfurreducens (strain ATCC 51573 / DSM 12127 / PCA).